The primary structure comprises 144 residues: Large ribosomal subunit protein uL15 (144 aa).

Basic and acidic residues predominate over residues 1–10; sequence MKLHELKPAE. The interval 1–52 is disordered; the sequence is MKLHELKPAEGSRQVRNRVGRGTSSGNGKTAGRGQKGQKARGKVRLGFEGGQ. Gly residues predominate over residues 23–35; sequence TSSGNGKTAGRGQ.

It belongs to the universal ribosomal protein uL15 family. In terms of assembly, part of the 50S ribosomal subunit.

Functionally, binds to the 23S rRNA. The sequence is that of Large ribosomal subunit protein uL15 from Ligilactobacillus salivarius (strain UCC118) (Lactobacillus salivarius).